Consider the following 440-residue polypeptide: L-gulonolactone oxidase (440 aa).

One can recognise an FAD-binding PCMH-type domain in the interval 17-187 (YSCEPELYFE…LNVTIQCVPA (171 aa)). A Pros-8alpha-FAD histidine modification is found at histidine 54. Residues 245 to 267 (WFWNYAIGYYLLEFLLWISVFVP) traverse the membrane as a helical segment.

The protein belongs to the oxygen-dependent FAD-linked oxidoreductase family. Requires FAD as cofactor.

It is found in the microsome membrane. The protein resides in the endoplasmic reticulum membrane. It carries out the reaction L-gulono-1,4-lactone + O2 = L-ascorbate + H2O2 + H(+). It participates in cofactor biosynthesis; L-ascorbate biosynthesis via UDP-alpha-D-glucuronate pathway; L-ascorbate from UDP-alpha-D-glucuronate: step 4/4. Oxidizes L-gulono-1,4-lactone to hydrogen peroxide and L-xylo-hexulonolactone which spontaneously isomerizes to L-ascorbate. This is L-gulonolactone oxidase (GULO) from Scyliorhinus torazame (Cloudy catshark).